A 553-amino-acid chain; its full sequence is Arginine--tRNA ligase (553 aa).

Positions 130-140 (ANPTGPVHLGG) match the 'HIGH' region motif.

The protein belongs to the class-I aminoacyl-tRNA synthetase family. Monomer.

The protein localises to the cytoplasm. The enzyme catalyses tRNA(Arg) + L-arginine + ATP = L-arginyl-tRNA(Arg) + AMP + diphosphate. The protein is Arginine--tRNA ligase of Saccharopolyspora erythraea (strain ATCC 11635 / DSM 40517 / JCM 4748 / NBRC 13426 / NCIMB 8594 / NRRL 2338).